The chain runs to 83 residues: Cytochrome b559 subunit alpha (83 aa).

A helical membrane pass occupies residues 21–35; that stretch reads VIHSITIPSLFIAGW. Residue His23 coordinates heme.

It belongs to the PsbE/PsbF family. As to quaternary structure, heterodimer of an alpha subunit and a beta subunit. PSII is composed of 1 copy each of membrane proteins PsbA, PsbB, PsbC, PsbD, PsbE, PsbF, PsbH, PsbI, PsbJ, PsbK, PsbL, PsbM, PsbT, PsbX, PsbY, PsbZ, Psb30/Ycf12, at least 3 peripheral proteins of the oxygen-evolving complex and a large number of cofactors. It forms dimeric complexes. Heme b is required as a cofactor.

Its subcellular location is the plastid. It localises to the chloroplast thylakoid membrane. Its function is as follows. This b-type cytochrome is tightly associated with the reaction center of photosystem II (PSII). PSII is a light-driven water:plastoquinone oxidoreductase that uses light energy to abstract electrons from H(2)O, generating O(2) and a proton gradient subsequently used for ATP formation. It consists of a core antenna complex that captures photons, and an electron transfer chain that converts photonic excitation into a charge separation. In Staurastrum punctulatum (Green alga), this protein is Cytochrome b559 subunit alpha.